The sequence spans 817 residues: MSEADQALVGPKADEPSPPAEEKDEGGGKEAAADAAPGPSASFRLMVTRREPAVKLQYAVSGLEPLSWSEDHRVSVSTARSVAVLELICDVHNPGQDLVIHRTSVPAPLNSCLLKVGSKTEVAECKEKFASSKDPTISQTFMLDRMFNPEGKALPPMRGFKYTSWSPMGCDANGRCLLAALTMDNRLTVQVNLNRLQWVQLVDLTEIYGDRLYETSYRLSKNEAPEGNLGDFAEFQRRHSMQTPVRMEWSSICTTQQVKHNNECRDVSSVLLAVLFENGNIAVWQFQLPFVGKESISSCNTIESGISSPSVLFWWEYEHNNRKMSGLIVGSAFGPVKILPVNLKAVKGYFTLRQPVVLWKEMDKLPVHSIKCVPLYHPYQKCSCSLVVAARGSYVFWCLLLISKAGLNVHNSHVTGLHSLPIVSITADKQNGTVYTCSSDGKVRQLIPIFTDVALKFEHQLIKLSDVFGSVRTHGIAVSPCGAYLAIITTEGMMNGLHPVNKNYQVQFVTLKTFEEAAAQLLESSVQNLFKQVDLIDLVRWKILKDKHIPQFLHEALEKKIESSGVTYFWRFKLFLLRILYQSMQKSPSEALWKPTHEDSKILLVDSPGMGDGEDEQQEEGTSKQGTKAGLQEKSKEGDTEETPEDSLTAGGDTGGREPVEEKLLEIQGKIEAVEMHLTREHMKRVLGEVYLHTWITENTSIPTRGLCNFLMSDEDYDDRTAQVLIGHISKKMNKQTFPERCSLCKEILPFTDRKQAVCSNGHIWLRCFLTYQSCQSLIYRRCLLHDSIARHPVPEDPDWIKRLLQSPCPFCDSPVF.

Met-1 carries the N-acetylmethionine modification. Residues 1–40 are disordered; sequence MSEADQALVGPKADEPSPPAEEKDEGGGKEAAADAAPGPS. Residue Lys-221 forms a Glycyl lysine isopeptide (Lys-Gly) (interchain with G-Cter in SUMO2) linkage. Residues Ser-600 and Ser-607 each carry the phosphoserine modification. The segment at 603 to 658 is disordered; it reads LLVDSPGMGDGEDEQQEEGTSKQGTKAGLQEKSKEGDTEETPEDSLTAGGDTGGRE. Lys-624 participates in a covalent cross-link: Glycyl lysine isopeptide (Lys-Gly) (interchain with G-Cter in SUMO2). Ser-647 carries the post-translational modification Phosphoserine.

Belongs to the TFIIIC subunit 4 family. As to quaternary structure, part of the TFIIIC subcomplex TFIIIC2, consisting of six subunits, GTF3C1, GTF3C2, GTF3C3, GTF3C4, GTF3C5 and GTF3C6. Interacts with BRF1, GTF3C1, GTF3C2, GTF3C5, GTF3C6, POLR3C and POLR3F.

It is found in the nucleus. The catalysed reaction is L-lysyl-[protein] + acetyl-CoA = N(6)-acetyl-L-lysyl-[protein] + CoA + H(+). Essential for RNA polymerase III to make a number of small nuclear and cytoplasmic RNAs, including 5S RNA, tRNA, and adenovirus-associated (VA) RNA of both cellular and viral origin. Has histone acetyltransferase activity (HAT) with unique specificity for free and nucleosomal H3. May cooperate with GTF3C5 in facilitating the recruitment of TFIIIB and RNA polymerase through direct interactions with BRF1, POLR3C and POLR3F. May be localized close to the A box. The protein is General transcription factor 3C polypeptide 4 (Gtf3c4) of Mus musculus (Mouse).